Here is a 561-residue protein sequence, read N- to C-terminus: Cytosolic purine 5'-nucleotidase (561 aa).

The active-site Nucleophile is the D52. Positions 52 and 54 each coordinate GMP. 2 residues coordinate IMP: D52 and D54. D52 and D54 together coordinate Mg(2+). D54 functions as the Proton donor in the catalytic mechanism. Residue R144 participates in (2R)-2,3-bisphosphoglycerate binding. R144 and N154 together coordinate ATP. R144 and N154 together coordinate dATP. N154 is a binding site for adenosine. N154 contributes to the P(1),P(4)-bis(5'-adenosyl) tetraphosphate binding site. The GMP site is built by R202, D206, K215, T249, and N250. Residues R202, D206, K215, T249, N250, S251, and K292 each contribute to the IMP site. Position 292 (K292) interacts with GMP. D351 serves as a coordination point for Mg(2+). K362 contributes to the (2R)-2,3-bisphosphoglycerate binding site. K362 provides a ligand contact to P(1),P(4)-bis(5'-adenosyl) tetraphosphate. Phosphoserine is present on S418. Residues M436 and Q453 each coordinate adenosine. The ATP site is built by Q453 and R456. DATP-binding residues include Q453 and R456. Q453 serves as a coordination point for P(1),P(4)-bis(5'-adenosyl) tetraphosphate. Y457 serves as a coordination point for (2R)-2,3-bisphosphoglycerate. Y457 provides a ligand contact to P(1),P(4)-bis(5'-adenosyl) tetraphosphate. S502, S511, and S527 each carry phosphoserine. The segment at 538 to 561 (PLAPQEITHCHDEDDDEEEEEEEE) is disordered. A required for tetramer assembly region spans residues 548 to 561 (HDEDDDEEEEEEEE). A compositionally biased stretch (acidic residues) spans 550 to 561 (EDDDEEEEEEEE).

It belongs to the 5'(3')-deoxyribonucleotidase family. As to quaternary structure, homotetramer. It depends on Mg(2+) as a cofactor. In terms of tissue distribution, widely expressed.

The protein resides in the cytoplasm. It localises to the cytosol. The catalysed reaction is a ribonucleoside 5'-phosphate + H2O = a ribonucleoside + phosphate. The enzyme catalyses a 2'-deoxyribonucleoside + a ribonucleoside 5'-phosphate = a ribonucleoside + a 2'-deoxyribonucleoside 5'-phosphate. It catalyses the reaction IMP + H2O = inosine + phosphate. It carries out the reaction GMP + H2O = guanosine + phosphate. The catalysed reaction is dIMP + H2O = 2'-deoxyinosine + phosphate. The enzyme catalyses dGMP + H2O = 2'-deoxyguanosine + phosphate. It catalyses the reaction XMP + H2O = xanthosine + phosphate. It carries out the reaction inosine + GMP = guanosine + IMP. The catalysed reaction is dGMP + inosine = 2'-deoxyguanosine + IMP. The enzyme catalyses dIMP + inosine = 2'-deoxyinosine + IMP. It catalyses the reaction inosine + UMP = uridine + IMP. It carries out the reaction inosine + CMP = cytidine + IMP. The catalysed reaction is inosine + AMP = IMP + adenosine. With respect to regulation, allosterically activated by various compounds including ATP, 2,3-BPG/2,3-Bisphosphoglyceric acid and Ap4A/P1,P4-bis(5'-adenosyl) tetraphosphate. Binding of an allosteric activator is a prerequisiste to magnesium and substrate binding. Inhibited by inorganic phosphate. Functionally, broad specificity cytosolic 5'-nucleotidase that catalyzes the dephosphorylation of 6-hydroxypurine nucleoside 5'-monophosphates. In addition, possesses a phosphotransferase activity by which it can transfer a phosphate from a donor nucleoside monophosphate to an acceptor nucleoside, preferably inosine, deoxyinosine and guanosine. Has the highest activities for IMP and GMP followed by dIMP, dGMP and XMP. Could also catalyze the transfer of phosphates from pyrimidine monophosphates but with lower efficiency. Through these activities regulates the purine nucleoside/nucleotide pools within the cell. In Homo sapiens (Human), this protein is Cytosolic purine 5'-nucleotidase.